Reading from the N-terminus, the 352-residue chain is Aspartic protease Bla g 2 (352 aa).

The N-terminal stretch at 1-19 is a signal peptide; the sequence is MIGLKLVTVLFAVATITHA. The propeptide at 20-24 is removed in mature form; sequence AELQR. The Peptidase A1 domain occupies 39–346; the sequence is YAGITKIGNQ…NWENKTMGFG (308 aa). Asp-55 is an active-site residue. 3 disulfides stabilise this stretch: Cys-59–Cys-151, Cys-68–Cys-73, and Cys-75–Cys-136. N-linked (GlcNAc...) asparagine glycosylation occurs at Asn-117. Zn(2+) contacts are provided by His-178 and His-186. Asp-239 is a catalytic residue. 2 cysteine pairs are disulfide-bonded: Cys-261–Cys-272 and Cys-276–Cys-309. An N-linked (GlcNAc...) asparagine glycan is attached at Asn-295. Positions 326 and 330 each coordinate Zn(2+). The N-linked (GlcNAc...) asparagine glycan is linked to Asn-340.

Belongs to the peptidase A1 family. In terms of assembly, homodimer.

Functions as a digestive enzyme in the cockroach. This is Aspartic protease Bla g 2 from Blattella germanica (German cockroach).